Here is a 166-residue protein sequence, read N- to C-terminus: Zinc finger CCHC domain-containing protein 13 (166 aa).

A CCHC-type 1; degenerate zinc finger spans residues 4 to 21 (KDFFACGHSGHWARGCPR). A CCHC-type 2; degenerate zinc finger spans residues 45-62 (YTCYCCGESGRNAKNCVL). 4 consecutive CCHC-type zinc fingers follow at residues 65–82 (NICY…DCKD), 89–106 (QHCY…DCDR), 110–127 (QKCY…DCAQ), and 128–145 (VKCY…NCSK).

The polypeptide is Zinc finger CCHC domain-containing protein 13 (ZCCHC13) (Homo sapiens (Human)).